The sequence spans 137 residues: Leaf-specific thionin DB4 (137 aa).

An N-terminal signal peptide occupies residues 1 to 28 (MAPSKSIKSVVICVLILGLVLEQVQVEG). Disulfide bonds link Cys31/Cys68, Cys32/Cys60, Cys40/Cys58, and Cys44/Cys54. A propeptide spans 75–137 (LNLLPESGEP…DGAVIQSVEA (63 aa)) (acidic domain).

Belongs to the plant thionin (TC 1.C.44) family. 4 C-C subfamily.

The protein localises to the secreted. Thionins are small plant proteins which are toxic to animal cells. They seem to exert their toxic effect at the level of the cell membrane. Their precise function is not known. In Hordeum vulgare (Barley), this protein is Leaf-specific thionin DB4 (THI1.3).